The following is a 449-amino-acid chain: Phosphoglucosamine mutase (449 aa).

S105 (phosphoserine intermediate) is an active-site residue. Residues S105, D242, D244, and D246 each contribute to the Mg(2+) site. S105 bears the Phosphoserine mark.

It belongs to the phosphohexose mutase family. It depends on Mg(2+) as a cofactor. In terms of processing, activated by phosphorylation.

The enzyme catalyses alpha-D-glucosamine 1-phosphate = D-glucosamine 6-phosphate. Functionally, catalyzes the conversion of glucosamine-6-phosphate to glucosamine-1-phosphate. The polypeptide is Phosphoglucosamine mutase (Clavibacter sepedonicus (Clavibacter michiganensis subsp. sepedonicus)).